We begin with the raw amino-acid sequence, 275 residues long: Elongation factor Ts (275 aa).

The interval 80 to 83 (TDFV) is involved in Mg(2+) ion dislocation from EF-Tu.

This sequence belongs to the EF-Ts family.

Its subcellular location is the cytoplasm. Functionally, associates with the EF-Tu.GDP complex and induces the exchange of GDP to GTP. It remains bound to the aminoacyl-tRNA.EF-Tu.GTP complex up to the GTP hydrolysis stage on the ribosome. The polypeptide is Elongation factor Ts (Kineococcus radiotolerans (strain ATCC BAA-149 / DSM 14245 / SRS30216)).